Consider the following 116-residue polypeptide: NADH-ubiquinone oxidoreductase chain 3 (116 aa).

3 helical membrane-spanning segments follow: residues 3 to 23 (LITT…TISF), 56 to 76 (FFLI…LLPL), and 85 to 105 (PALT…GLIY).

The protein belongs to the complex I subunit 3 family.

It localises to the mitochondrion membrane. It catalyses the reaction a ubiquinone + NADH + 5 H(+)(in) = a ubiquinol + NAD(+) + 4 H(+)(out). Its function is as follows. Core subunit of the mitochondrial membrane respiratory chain NADH dehydrogenase (Complex I) that is believed to belong to the minimal assembly required for catalysis. Complex I functions in the transfer of electrons from NADH to the respiratory chain. The immediate electron acceptor for the enzyme is believed to be ubiquinone. In Oncorhynchus masou (Cherry salmon), this protein is NADH-ubiquinone oxidoreductase chain 3 (MT-ND3).